A 122-amino-acid chain; its full sequence is Protein NIM1-INTERACTING 2 (122 aa).

The span at 1 to 22 (MNNSLKKEERVEEDNGKSDGNR) shows a compositional bias: basic and acidic residues. Positions 1–28 (MNNSLKKEERVEEDNGKSDGNRGKPSTE) are disordered. The interval 39-45 (DEFFKIL) is involved in NPR1/NIM1 interaction. Positions 70–74 (KKRKR) match the Nuclear localization signal motif.

Interacts with NPR1 N-terminal region.

The protein resides in the nucleus. In Arabidopsis thaliana (Mouse-ear cress), this protein is Protein NIM1-INTERACTING 2.